A 166-amino-acid chain; its full sequence is Deglycase PH1704 (166 aa).

One can recognise a PfpI endopeptidase domain in the interval 1 to 166 (MKVLFLTANE…WMREFVKLLK (166 aa)). The Nucleophile role is filled by Cys-100. His-101 is an active-site residue.

It belongs to the peptidase C56 family. In terms of assembly, homohexamer formed by a dimer of trimers that assemble into a hollow ring structure.

It is found in the cytoplasm. The enzyme catalyses N(omega)-(1-hydroxy-2-oxopropyl)-L-arginyl-[protein] + H2O = lactate + L-arginyl-[protein] + H(+). It carries out the reaction N(6)-(1-hydroxy-2-oxopropyl)-L-lysyl-[protein] + H2O = lactate + L-lysyl-[protein] + H(+). The catalysed reaction is S-(1-hydroxy-2-oxopropyl)-L-cysteinyl-[protein] + H2O = lactate + L-cysteinyl-[protein] + H(+). It catalyses the reaction N(omega)-(1-hydroxy-2-oxoethyl)-L-arginyl-[protein] + H2O = L-arginyl-[protein] + glycolate + H(+). The enzyme catalyses N(6)-(1-hydroxy-2-oxoethyl)-L-lysyl-[protein] + H2O = glycolate + L-lysyl-[protein] + H(+). It carries out the reaction S-(1-hydroxy-2-oxoethyl)-L-cysteinyl-[protein] + H2O = glycolate + L-cysteinyl-[protein] + H(+). Functionally, deglycase that catalyzes the deglycation of the Maillard adducts formed between amino groups of proteins and reactive carbonyl groups of glyoxals. Thus, functions as a protein deglycase that repairs methylglyoxal- and glyoxal-glycated proteins, and releases repaired proteins and lactate or glycolate, respectively. Deglycates cysteine, arginine and lysine residues in proteins, and thus reactivates these proteins by reversing glycation by glyoxals. Acts on early glycation intermediates (hemithioacetals and aminocarbinols), preventing the formation of advanced glycation endproducts (AGE) that cause irreversible damage. Also displays proteolytic activity. The polypeptide is Deglycase PH1704 (Pyrococcus horikoshii (strain ATCC 700860 / DSM 12428 / JCM 9974 / NBRC 100139 / OT-3)).